Reading from the N-terminus, the 436-residue chain is Bystin (436 aa).

A disordered region spans residues 1 to 105 (MPKLKVTRGA…GSDEEDEEWP (105 aa)). Ser54 carries the phosphoserine modification. Residues 70–86 (TEHATGDRPAKPRERAT) are compositionally biased toward basic and acidic residues. Positions 96 to 105 (GSDEEDEEWP) are enriched in acidic residues. A Phosphoserine modification is found at Ser97. Position 155 is a phosphothreonine (Thr155). Residues Ser166 and Ser413 each carry the phosphoserine modification.

This sequence belongs to the bystin family. As to quaternary structure, binds trophinin, tastin and cytokeratins.

The protein localises to the cytoplasm. It localises to the nucleus. Its subcellular location is the nucleolus. In terms of biological role, required for processing of 20S pre-rRNA precursor and biogenesis of 40S ribosomal subunits. This chain is Bystin, found in Rattus norvegicus (Rat).